Reading from the N-terminus, the 55-residue chain is Large ribosomal subunit protein bL33 (55 aa).

The protein belongs to the bacterial ribosomal protein bL33 family.

This is Large ribosomal subunit protein bL33 from Bradyrhizobium diazoefficiens (strain JCM 10833 / BCRC 13528 / IAM 13628 / NBRC 14792 / USDA 110).